We begin with the raw amino-acid sequence, 338 residues long: MKVYYDKDADLSLIKKKKVAIIGYGSQGHAHANNLNDSGVKVTIGLRKGGASWDKAKKAGLTVKEVGAAVKDADVIMLLLPDEQMASVYQTEVEPVLKKNATLAFAHGFNVHYGQIIPREDLDVIMVAPKGPGHLVRSTYTQGGGVPSLIAVHQDKSGKARDLALSYAAANGGTRGGVIETTFKEETETDLFGEQVVLCGGLTSLIQAGFETLVEAGYAPEMAYFECLHEVKLIVDLIYEGGIANMRYSVSNNAEYGDVSRGPRIITDATRNEMRKILREIQTGEYAREFILENRAGAPVLKSSRRLASEHPIETVGAKLRDMMPWISKNKLVDQAKN.

Positions 1–181 (MKVYYDKDAD…GGTRGGVIET (181 aa)) constitute a KARI N-terminal Rossmann domain. Residues 24–27 (YGSQ), arginine 47, and serine 52 contribute to the NADP(+) site. Histidine 107 is an active-site residue. An NADP(+)-binding site is contributed by glycine 133. The KARI C-terminal knotted domain occupies 182 to 327 (TFKEETETDL…AKLRDMMPWI (146 aa)). Residues aspartate 190, glutamate 194, glutamate 226, and glutamate 230 each contribute to the Mg(2+) site. Residue serine 251 coordinates substrate.

It belongs to the ketol-acid reductoisomerase family. Mg(2+) is required as a cofactor.

It carries out the reaction (2R)-2,3-dihydroxy-3-methylbutanoate + NADP(+) = (2S)-2-acetolactate + NADPH + H(+). The catalysed reaction is (2R,3R)-2,3-dihydroxy-3-methylpentanoate + NADP(+) = (S)-2-ethyl-2-hydroxy-3-oxobutanoate + NADPH + H(+). Its pathway is amino-acid biosynthesis; L-isoleucine biosynthesis; L-isoleucine from 2-oxobutanoate: step 2/4. The protein operates within amino-acid biosynthesis; L-valine biosynthesis; L-valine from pyruvate: step 2/4. In terms of biological role, involved in the biosynthesis of branched-chain amino acids (BCAA). Catalyzes an alkyl-migration followed by a ketol-acid reduction of (S)-2-acetolactate (S2AL) to yield (R)-2,3-dihydroxy-isovalerate. In the isomerase reaction, S2AL is rearranged via a Mg-dependent methyl migration to produce 3-hydroxy-3-methyl-2-ketobutyrate (HMKB). In the reductase reaction, this 2-ketoacid undergoes a metal-dependent reduction by NADPH to yield (R)-2,3-dihydroxy-isovalerate. This Nitrosomonas europaea (strain ATCC 19718 / CIP 103999 / KCTC 2705 / NBRC 14298) protein is Ketol-acid reductoisomerase (NADP(+)).